A 503-amino-acid polypeptide reads, in one-letter code: Probable cytosol aminopeptidase (503 aa).

Mn(2+) contacts are provided by lysine 274 and aspartate 279. Lysine 286 is a catalytic residue. Positions 297, 356, and 358 each coordinate Mn(2+). Residue arginine 360 is part of the active site.

Belongs to the peptidase M17 family. It depends on Mn(2+) as a cofactor.

Its subcellular location is the cytoplasm. The enzyme catalyses Release of an N-terminal amino acid, Xaa-|-Yaa-, in which Xaa is preferably Leu, but may be other amino acids including Pro although not Arg or Lys, and Yaa may be Pro. Amino acid amides and methyl esters are also readily hydrolyzed, but rates on arylamides are exceedingly low.. It catalyses the reaction Release of an N-terminal amino acid, preferentially leucine, but not glutamic or aspartic acids.. Functionally, presumably involved in the processing and regular turnover of intracellular proteins. Catalyzes the removal of unsubstituted N-terminal amino acids from various peptides. This is Probable cytosol aminopeptidase from Burkholderia pseudomallei (strain 1710b).